A 320-amino-acid polypeptide reads, in one-letter code: Cytochrome f (320 aa).

An N-terminal signal peptide occupies residues 1–35; the sequence is MQNRNTFSWVKEQMTRFISVSIMIYVITRTSIANA. 4 residues coordinate heme: Tyr36, Cys56, Cys59, and His60. A helical membrane pass occupies residues 286–306; it reads VQGLLFFLASVILAQIFLVLK.

The protein belongs to the cytochrome f family. As to quaternary structure, the 4 large subunits of the cytochrome b6-f complex are cytochrome b6, subunit IV (17 kDa polypeptide, petD), cytochrome f and the Rieske protein, while the 4 small subunits are PetG, PetL, PetM and PetN. The complex functions as a dimer. It depends on heme as a cofactor.

It localises to the plastid. The protein localises to the chloroplast thylakoid membrane. Functionally, component of the cytochrome b6-f complex, which mediates electron transfer between photosystem II (PSII) and photosystem I (PSI), cyclic electron flow around PSI, and state transitions. This chain is Cytochrome f, found in Acorus calamus (Sweet flag).